Here is a 555-residue protein sequence, read N- to C-terminus: Membrane protein insertase YidC (555 aa).

The chain crosses the membrane as a helical span at residues 7 to 24 (ILWVIFSMSLVLLYDNWQ). The segment at 62-81 (APGAAGTAAPAAPQAAAQPT) is disordered. 5 helical membrane passes run 334–354 (LELV…FWLL), 360–380 (FLGN…LVFF), 430–450 (LGGC…YWVL), 468–488 (LSVP…MFVQ), and 503–523 (VMMI…AGLV).

Belongs to the OXA1/ALB3/YidC family. Type 1 subfamily. As to quaternary structure, interacts with the Sec translocase complex via SecD. Specifically interacts with transmembrane segments of nascent integral membrane proteins during membrane integration.

The protein resides in the cell inner membrane. Required for the insertion and/or proper folding and/or complex formation of integral membrane proteins into the membrane. Involved in integration of membrane proteins that insert both dependently and independently of the Sec translocase complex, as well as at least some lipoproteins. Aids folding of multispanning membrane proteins. The protein is Membrane protein insertase YidC of Cupriavidus necator (strain ATCC 17699 / DSM 428 / KCTC 22496 / NCIMB 10442 / H16 / Stanier 337) (Ralstonia eutropha).